Here is a 235-residue protein sequence, read N- to C-terminus: Ribitol-5-phosphate cytidylyltransferase (235 aa).

Residues 7-10, 82-88, and Ser-113 contribute to the CTP site; these read LAGG and GADRNTS.

The protein belongs to the IspD/TarI cytidylyltransferase family. TarI subfamily.

The catalysed reaction is D-ribitol 5-phosphate + CTP + H(+) = CDP-L-ribitol + diphosphate. It functions in the pathway cell wall biogenesis; poly(ribitol phosphate) teichoic acid biosynthesis. Functionally, catalyzes the transfer of the cytidylyl group of CTP to D-ribitol 5-phosphate. The polypeptide is Ribitol-5-phosphate cytidylyltransferase (Streptococcus pneumoniae serotype 2 (strain D39 / NCTC 7466)).